Here is a 48-residue protein sequence, read N- to C-terminus: Lantibiotic salivaricin-A (48 aa).

The propeptide occupies 1–26 (MKNSKDILNNAIEEVSEKELMEVAGG). 2 cross-links (beta-methyllanthionine (Thr-Cys)) span residues 35 to 40 (TITDDC) and 37 to 47 (TDDCPNSVFVC). A cross-link (lanthionine (Ser-Cys)) is located at residues 43 to 48 (SVFVCC).

This sequence belongs to the type A lantibiotic family. In terms of processing, maturation of lantibiotics involves the enzymatic conversion of Thr, and Ser into dehydrated AA and the formation of thioether bonds with cysteine. This is followed by membrane translocation and cleavage of the modified precursor.

Lanthionine-containing peptide antibiotic (lantibiotic) active on Gram-positive bacteria. The bactericidal activity of lantibiotics is based on depolarization of energized bacterial cytoplasmic membranes, initiated by the formation of aqueous transmembrane pores. The polypeptide is Lantibiotic salivaricin-A (salA) (Streptococcus salivarius).